The primary structure comprises 433 residues: Chaperone SurA (433 aa).

A signal peptide spans 1–24 (MDGIKLLLSIIILYFYTYINCAIA). PpiC domains follow at residues 173 to 274 (NTTF…KVHD) and 285 to 385 (ITEV…QLQN).

It localises to the periplasm. The enzyme catalyses [protein]-peptidylproline (omega=180) = [protein]-peptidylproline (omega=0). Its function is as follows. Chaperone involved in the correct folding and assembly of outer membrane proteins. Recognizes specific patterns of aromatic residues and the orientation of their side chains, which are found more frequently in integral outer membrane proteins. May act in both early periplasmic and late outer membrane-associated steps of protein maturation. This is Chaperone SurA from Baumannia cicadellinicola subsp. Homalodisca coagulata.